A 72-amino-acid chain; its full sequence is Translation initiation factor IF-1 1 (72 aa).

An S1-like domain is found at 1 to 72 (MAKDDVIQMQ…SRARIVFRAK (72 aa)).

The protein belongs to the IF-1 family. In terms of assembly, component of the 30S ribosomal translation pre-initiation complex which assembles on the 30S ribosome in the order IF-2 and IF-3, IF-1 and N-formylmethionyl-tRNA(fMet); mRNA recruitment can occur at any time during PIC assembly.

The protein localises to the cytoplasm. One of the essential components for the initiation of protein synthesis. Stabilizes the binding of IF-2 and IF-3 on the 30S subunit to which N-formylmethionyl-tRNA(fMet) subsequently binds. Helps modulate mRNA selection, yielding the 30S pre-initiation complex (PIC). Upon addition of the 50S ribosomal subunit IF-1, IF-2 and IF-3 are released leaving the mature 70S translation initiation complex. This chain is Translation initiation factor IF-1 1, found in Ralstonia nicotianae (strain ATCC BAA-1114 / GMI1000) (Ralstonia solanacearum).